Reading from the N-terminus, the 868-residue chain is Leucine--tRNA ligase (868 aa).

A 'HIGH' region motif is present at residues 42–52 (PYPSGKLHMGH). Residues 627–631 (KMSKS) carry the 'KMSKS' region motif. ATP is bound at residue K630.

Belongs to the class-I aminoacyl-tRNA synthetase family.

Its subcellular location is the cytoplasm. It carries out the reaction tRNA(Leu) + L-leucine + ATP = L-leucyl-tRNA(Leu) + AMP + diphosphate. The polypeptide is Leucine--tRNA ligase (Pseudomonas savastanoi pv. phaseolicola (strain 1448A / Race 6) (Pseudomonas syringae pv. phaseolicola (strain 1448A / Race 6))).